The sequence spans 960 residues: Chromosome transmission fidelity protein 18 (960 aa).

Disordered regions lie at residues 56–79 (DLFH…STLD) and 91–113 (DISE…YPNT). Polar residues predominate over residues 58–69 (FHSSQPVGSPTR). ATP is bound at residue 423-430 (GLAGAGKT).

Belongs to the activator 1 small subunits family. CTF18 subfamily. Component of the ctf18-RFC complex which consists of ctf18, ctf8, dcc1, rfc2, rfc3, rfc4 and rfc5.

Its subcellular location is the nucleus. Its function is as follows. Essential for the fidelity of chromosome transmission. Required for the DNA replication block checkpoint. Replication factor C (RFC) complex has an essential but redundant activity in sister chromatid cohesion establishment. Acts as a PCNA loader, loading PCNA onto primed templates. An RFC-like complex (ctf18-RFC) is formed where ctf18 replaces rfc1 in the RFC complex along with the association of dcc1 and ctf8. This complex is required for efficient establishment of chromosome cohesion during S-phase. In Schizosaccharomyces pombe (strain 972 / ATCC 24843) (Fission yeast), this protein is Chromosome transmission fidelity protein 18 (ctf18).